The following is a 124-amino-acid chain: RNA polymerase-binding protein RbpA (124 aa).

Zn(2+) is bound by residues cysteine 34, histidine 38, cysteine 56, and cysteine 59. The interval 73-124 (EKKAKPARTHWDMLMERRTREELEEVLEERLAVLRSGAMNIAVHPRDSRKSA) is sufficient for interaction with HrdB (SigA).

The protein belongs to the RNA polymerase-binding protein RbpA family. In terms of assembly, homodimer. Forms a complex with the RNAP, and a complex with RNAP plus principal sigma factor HrdB associated with promoter. Binds to free principal sigma factors HrdB and HrdA, probably via the sigma-2 domain, but not to 6 other sigma factors tested. The cofactor is Zn(2+).

Binds to RNA polymerase (RNAP), stimulating transcription from principal, but not alternative sigma factor promoters. Stimulates transcription from several principal sigma factor HrdB (SigA)-dependent promoters but not from a SigR-dependent promoter. Stimulation occurs in the presence of the transcription initiation inhibitor rifampicin (Rif). In Streptomyces coelicolor (strain ATCC BAA-471 / A3(2) / M145), this protein is RNA polymerase-binding protein RbpA.